Here is a 204-residue protein sequence, read N- to C-terminus: Holliday junction branch migration complex subunit RuvA (204 aa).

The segment at 1 to 64 (MIGRLQGILL…EDAHLLFGFA (64 aa)) is domain I. The tract at residues 65–143 (QKTDRTLFRE…GVKQSDFFVE (79 aa)) is domain II. Positions 144–155 (STHIPLSPSIES) are flexible linker. Residues 156–204 (HSESSSDEAISALIALGYKPVEAEKMVKRVAKPELTSEQVIREALKVAL) are domain III.

This sequence belongs to the RuvA family. As to quaternary structure, homotetramer. Forms an RuvA(8)-RuvB(12)-Holliday junction (HJ) complex. HJ DNA is sandwiched between 2 RuvA tetramers; dsDNA enters through RuvA and exits via RuvB. An RuvB hexamer assembles on each DNA strand where it exits the tetramer. Each RuvB hexamer is contacted by two RuvA subunits (via domain III) on 2 adjacent RuvB subunits; this complex drives branch migration. In the full resolvosome a probable DNA-RuvA(4)-RuvB(12)-RuvC(2) complex forms which resolves the HJ.

The protein resides in the cytoplasm. In terms of biological role, the RuvA-RuvB-RuvC complex processes Holliday junction (HJ) DNA during genetic recombination and DNA repair, while the RuvA-RuvB complex plays an important role in the rescue of blocked DNA replication forks via replication fork reversal (RFR). RuvA specifically binds to HJ cruciform DNA, conferring on it an open structure. The RuvB hexamer acts as an ATP-dependent pump, pulling dsDNA into and through the RuvAB complex. HJ branch migration allows RuvC to scan DNA until it finds its consensus sequence, where it cleaves and resolves the cruciform DNA. The protein is Holliday junction branch migration complex subunit RuvA of Haemophilus influenzae (strain ATCC 51907 / DSM 11121 / KW20 / Rd).